We begin with the raw amino-acid sequence, 290 residues long: ATP synthase gamma chain (290 aa).

Belongs to the ATPase gamma chain family. F-type ATPases have 2 components, CF(1) - the catalytic core - and CF(0) - the membrane proton channel. CF(1) has five subunits: alpha(3), beta(3), gamma(1), delta(1), epsilon(1). CF(0) has three main subunits: a, b and c.

Its subcellular location is the cell inner membrane. Functionally, produces ATP from ADP in the presence of a proton gradient across the membrane. The gamma chain is believed to be important in regulating ATPase activity and the flow of protons through the CF(0) complex. This chain is ATP synthase gamma chain, found in Chlorobium luteolum (strain DSM 273 / BCRC 81028 / 2530) (Pelodictyon luteolum).